Reading from the N-terminus, the 210-residue chain is HTH-type transcriptional repressor FabR (210 aa).

The region spanning 10–70 (KTRRSLVEAA…TMVDESGLML (61 aa)) is the HTH tetR-type domain. A DNA-binding region (H-T-H motif) is located at residues 33–52 (SLREVAREAGIAPTSFYRHF).

As to quaternary structure, homodimer.

The protein localises to the cytoplasm. Its function is as follows. Represses the transcription of fabB, involved in unsaturated fatty acid (UFA) biosynthesis. By controlling UFA production, FabR directly influences the physical properties of the membrane bilayer. This chain is HTH-type transcriptional repressor FabR, found in Klebsiella pneumoniae subsp. pneumoniae (strain ATCC 700721 / MGH 78578).